The primary structure comprises 235 residues: Class B acid phosphatase (235 aa).

The first 22 residues, 1–22 (MKNLVKLSLIAMLTAATLPAMA), serve as a signal peptide directing secretion. Asp-67 acts as the Nucleophile in catalysis. 2 residues coordinate Mg(2+): Asp-67 and Asp-69. Asp-69 functions as the Proton donor in the catalytic mechanism. Residues 135 to 136 (TG) and Lys-175 each bind substrate. Residue Asp-190 participates in Mg(2+) binding.

The protein belongs to the class B bacterial acid phosphatase family. In terms of assembly, homotetramer. Mg(2+) is required as a cofactor.

Its subcellular location is the periplasm. It carries out the reaction a phosphate monoester + H2O = an alcohol + phosphate. Dephosphorylates several organic phosphate monoesters. Also has a phosphotransferase activity catalyzing the transfer of low-energy phosphate groups from organic phosphate monoesters to free hydroxyl groups of various organic compounds. The sequence is that of Class B acid phosphatase from Aggregatibacter actinomycetemcomitans serotype C (strain D11S-1) (Actinobacillus actinomycetemcomitans).